The sequence spans 215 residues: Pyrrolidone-carboxylate peptidase (215 aa).

Residues Glu-80, Cys-143, and His-167 contribute to the active site.

It belongs to the peptidase C15 family. Homotetramer.

It is found in the cytoplasm. It catalyses the reaction Release of an N-terminal pyroglutamyl group from a polypeptide, the second amino acid generally not being Pro.. In terms of biological role, removes 5-oxoproline from various penultimate amino acid residues except L-proline. In Brevibacillus brevis (strain 47 / JCM 6285 / NBRC 100599), this protein is Pyrrolidone-carboxylate peptidase.